Reading from the N-terminus, the 366-residue chain is Histidinol-phosphate aminotransferase 2 (366 aa).

Lysine 226 carries the post-translational modification N6-(pyridoxal phosphate)lysine.

This sequence belongs to the class-II pyridoxal-phosphate-dependent aminotransferase family. Histidinol-phosphate aminotransferase subfamily. Homodimer. The cofactor is pyridoxal 5'-phosphate.

The enzyme catalyses L-histidinol phosphate + 2-oxoglutarate = 3-(imidazol-4-yl)-2-oxopropyl phosphate + L-glutamate. Its pathway is amino-acid biosynthesis; L-histidine biosynthesis; L-histidine from 5-phospho-alpha-D-ribose 1-diphosphate: step 7/9. The protein is Histidinol-phosphate aminotransferase 2 (hisC2) of Haemophilus influenzae (strain ATCC 51907 / DSM 11121 / KW20 / Rd).